A 429-amino-acid chain; its full sequence is 3-phosphoshikimate 1-carboxyvinyltransferase (429 aa).

Residues Lys21, Ser22, and Arg26 each coordinate 3-phosphoshikimate. Lys21 contributes to the phosphoenolpyruvate binding site. Phosphoenolpyruvate contacts are provided by Gly94 and Arg122. 3-phosphoshikimate contacts are provided by Ser167, Gln169, Asp315, and Lys342. Gln169 contributes to the phosphoenolpyruvate binding site. Catalysis depends on Asp315, which acts as the Proton acceptor. The phosphoenolpyruvate site is built by Arg346 and Arg388.

Belongs to the EPSP synthase family. As to quaternary structure, monomer.

It localises to the cytoplasm. It catalyses the reaction 3-phosphoshikimate + phosphoenolpyruvate = 5-O-(1-carboxyvinyl)-3-phosphoshikimate + phosphate. The protein operates within metabolic intermediate biosynthesis; chorismate biosynthesis; chorismate from D-erythrose 4-phosphate and phosphoenolpyruvate: step 6/7. Its function is as follows. Catalyzes the transfer of the enolpyruvyl moiety of phosphoenolpyruvate (PEP) to the 5-hydroxyl of shikimate-3-phosphate (S3P) to produce enolpyruvyl shikimate-3-phosphate and inorganic phosphate. This chain is 3-phosphoshikimate 1-carboxyvinyltransferase, found in Desulforamulus reducens (strain ATCC BAA-1160 / DSM 100696 / MI-1) (Desulfotomaculum reducens).